The chain runs to 322 residues: RING finger protein 113B (322 aa).

A disordered region spans residues 24 to 92; that stretch reads KPGRKGAAGL…EEAAPESLDV (69 aa). Over residues 46-60 the composition is skewed to low complexity; that stretch reads SSSSGDEGDTVAQPP. A C3H1-type zinc finger spans residues 190-218; sequence DYQPDICKDYKETGFCGFGDSCKFLHDRS. An RING-type zinc finger spans residues 256–294; that stretch reads CFICRQAFQNPVVTKCRHYFCESCALEHFRATPRCYICD.

The polypeptide is RING finger protein 113B (RNF113B) (Homo sapiens (Human)).